Reading from the N-terminus, the 521-residue chain is Na(+)/H(+) antiporter ApNhaP (521 aa).

Topologically, residues M1–Q18 are periplasmic. Residues F19–F39 form a helical membrane-spanning segment. Residues R40–Q41 lie on the Cytoplasmic side of the membrane. The helical transmembrane segment at I42–L62 threads the bilayer. Over V63–N94 the chain is Periplasmic. Residues L95–F115 traverse the membrane as a helical segment. The Cytoplasmic portion of the chain corresponds to S116–P126. The chain crosses the membrane as a helical span at residues I127 to F147. At R148 to S164 the chain is on the periplasmic side. The helical transmembrane segment at L165–T185 threads the bilayer. The Cytoplasmic portion of the chain corresponds to Q186 to L194. Residues I195 to I215 form a helical membrane-spanning segment. The Periplasmic segment spans residues S216 to E245. Residues L246–S266 traverse the membrane as a helical segment. Topologically, residues R267–L276 are cytoplasmic. The helical transmembrane segment at L277 to I297 threads the bilayer. At G298–Q311 the chain is on the periplasmic side. A helical transmembrane segment spans residues L312–G332. The Cytoplasmic segment spans residues T333–T349. A helical transmembrane segment spans residues V350–V370. Topologically, residues M371–E380 are periplasmic. A helical transmembrane segment spans residues A381–I401. Residues E402–E521 lie on the Cytoplasmic side of the membrane.

It belongs to the monovalent cation:proton antiporter 1 (CPA1) transporter (TC 2.A.36) family.

The protein localises to the cell inner membrane. Na(+)/H(+) antiporter that extrudes sodium in exchange for external protons. Also shows high Ca(2+)/H(+) antiporter activity at alkaline pH. Does not catalyze exchange between Li(+) and H(+). The sequence is that of Na(+)/H(+) antiporter ApNhaP (apnhaP) from Aphanothece halophytica.